A 361-amino-acid chain; its full sequence is Probable dual-specificity RNA methyltransferase RlmN (361 aa).

The active-site Proton acceptor is Glu-91. The Radical SAM core domain occupies 97-329; that stretch reads QHYGLSVCVT…KKKGGNCVVR (233 aa). A disulfide bridge connects residues Cys-104 and Cys-340. 3 residues coordinate [4Fe-4S] cluster: Cys-111, Cys-115, and Cys-118. Residues 163–164, Ser-195, 218–220, and Asn-296 each bind S-adenosyl-L-methionine; these read GE and SLH. The active-site S-methylcysteine intermediate is Cys-340.

Belongs to the radical SAM superfamily. RlmN family. The cofactor is [4Fe-4S] cluster.

Its subcellular location is the cytoplasm. The catalysed reaction is adenosine(2503) in 23S rRNA + 2 reduced [2Fe-2S]-[ferredoxin] + 2 S-adenosyl-L-methionine = 2-methyladenosine(2503) in 23S rRNA + 5'-deoxyadenosine + L-methionine + 2 oxidized [2Fe-2S]-[ferredoxin] + S-adenosyl-L-homocysteine. It catalyses the reaction adenosine(37) in tRNA + 2 reduced [2Fe-2S]-[ferredoxin] + 2 S-adenosyl-L-methionine = 2-methyladenosine(37) in tRNA + 5'-deoxyadenosine + L-methionine + 2 oxidized [2Fe-2S]-[ferredoxin] + S-adenosyl-L-homocysteine. Functionally, specifically methylates position 2 of adenine 2503 in 23S rRNA and position 2 of adenine 37 in tRNAs. The chain is Probable dual-specificity RNA methyltransferase RlmN from Streptococcus pneumoniae (strain Hungary19A-6).